The chain runs to 362 residues: N-acylethanolamine-hydrolyzing acid amidase (362 aa).

The signal sequence occupies residues 1–33 (MGTLATRAACHGAHLALALLLLLSLSGPWLSAV). Asn42 and Asn112 each carry an N-linked (GlcNAc...) asparagine glycan. Cys131 serves as the catalytic Nucleophile. Residues Asn314 and Asn338 are each glycosylated (N-linked (GlcNAc...) asparagine).

Belongs to the acid ceramidase family. As to quaternary structure, heterodimer of an alpha and a beta subunit, produced by autocatalytic cleavage. N-glycosylated. Tunicamycin treatment causes a reduction in specific activity against N-palmitoylethanolamine. In terms of processing, autoproteolytic cleavage at pH 4.5 gives rise to the alpha and beta subunit. Cleavage gives rise to a conformation change that activates the enzyme. The same catalytic Cys residue mediates the autoproteolytic cleavage and subsequent hydrolysis of lipid substrates.

Its subcellular location is the lysosome. The protein resides in the membrane. The catalysed reaction is N-hexadecanoylethanolamine + H2O = ethanolamine + hexadecanoate. It carries out the reaction an N-(long-chain fatty acyl)ethanolamine + H2O = a long-chain fatty acid + ethanolamine. The enzyme catalyses N-dodecanoylethanolamine + H2O = dodecanoate + ethanolamine. It catalyses the reaction N-tetradecanoylethanolamine + H2O = tetradecanoate + ethanolamine. The catalysed reaction is an N-acylsphing-4-enine + H2O = sphing-4-enine + a fatty acid. It carries out the reaction N-hexadecanoylsphing-4-enine + H2O = sphing-4-enine + hexadecanoate. The enzyme catalyses N-dodecanoylsphing-4-enine + H2O = dodecanoate + sphing-4-enine. It participates in lipid metabolism; fatty acid metabolism. In terms of biological role, degrades bioactive fatty acid amides to their corresponding acids, with the following preference: N-palmitoylethanolamine &gt; N-myristoylethanolamine &gt; N-stearoylethanolamine &gt; N-oleoylethanolamine &gt; N-linoleoylethanolamine &gt; N-arachidonoylethanolamine. The chain is N-acylethanolamine-hydrolyzing acid amidase from Mus musculus (Mouse).